The chain runs to 584 residues: Sulfite reductase [NADPH] hemoprotein beta-component (584 aa).

Residues C447, C453, C492, and C496 each coordinate [4Fe-4S] cluster. C496 contributes to the siroheme binding site.

Belongs to the nitrite and sulfite reductase 4Fe-4S domain family. As to quaternary structure, alpha(8)-beta(8). The alpha component is a flavoprotein, the beta component is a hemoprotein. Siroheme is required as a cofactor. [4Fe-4S] cluster serves as cofactor.

The catalysed reaction is hydrogen sulfide + 3 NADP(+) + 3 H2O = sulfite + 3 NADPH + 4 H(+). It functions in the pathway sulfur metabolism; hydrogen sulfide biosynthesis; hydrogen sulfide from sulfite (NADPH route): step 1/1. Its function is as follows. Component of the sulfite reductase complex that catalyzes the 6-electron reduction of sulfite to sulfide. This is one of several activities required for the biosynthesis of L-cysteine from sulfate. This is Sulfite reductase [NADPH] hemoprotein beta-component from Colwellia psychrerythraea (strain 34H / ATCC BAA-681) (Vibrio psychroerythus).